Reading from the N-terminus, the 621-residue chain is Phosphomethylpyrimidine synthase (621 aa).

Positions 1-23 are enriched in low complexity; that stretch reads MTAPFLSSLSPTSPLASATAPFP. A disordered region spans residues 1–29; the sequence is MTAPFLSSLSPTSPLASATAPFPGSRKVY. Substrate-binding positions include Asn-215, Met-244, Tyr-273, His-309, 329–331, 370–373, and Glu-409; these read SRG and DGLR. Zn(2+) is bound at residue His-413. Residue Tyr-436 participates in substrate binding. Residue His-477 participates in Zn(2+) binding. Cys-557, Cys-560, and Cys-565 together coordinate [4Fe-4S] cluster.

This sequence belongs to the ThiC family. As to quaternary structure, homodimer. [4Fe-4S] cluster is required as a cofactor.

The enzyme catalyses 5-amino-1-(5-phospho-beta-D-ribosyl)imidazole + S-adenosyl-L-methionine = 4-amino-2-methyl-5-(phosphooxymethyl)pyrimidine + CO + 5'-deoxyadenosine + formate + L-methionine + 3 H(+). It participates in cofactor biosynthesis; thiamine diphosphate biosynthesis. Catalyzes the synthesis of the hydroxymethylpyrimidine phosphate (HMP-P) moiety of thiamine from aminoimidazole ribotide (AIR) in a radical S-adenosyl-L-methionine (SAM)-dependent reaction. The chain is Phosphomethylpyrimidine synthase from Rhodospirillum rubrum (strain ATCC 11170 / ATH 1.1.1 / DSM 467 / LMG 4362 / NCIMB 8255 / S1).